A 550-amino-acid chain; its full sequence is Chaperonin GroEL (550 aa).

Residues 30 to 33, lysine 51, 87 to 91, glycine 415, and aspartate 496 each bind ATP; these read TLGP and DGTTT.

It belongs to the chaperonin (HSP60) family. As to quaternary structure, forms a cylinder of 14 subunits composed of two heptameric rings stacked back-to-back. Interacts with the co-chaperonin GroES.

It is found in the cytoplasm. It catalyses the reaction ATP + H2O + a folded polypeptide = ADP + phosphate + an unfolded polypeptide.. In terms of biological role, together with its co-chaperonin GroES, plays an essential role in assisting protein folding. The GroEL-GroES system forms a nano-cage that allows encapsulation of the non-native substrate proteins and provides a physical environment optimized to promote and accelerate protein folding. The chain is Chaperonin GroEL from Rickettsia bellii (strain OSU 85-389).